A 957-amino-acid chain; its full sequence is Leucine--tRNA ligase (957 aa).

A 'HIGH' region motif is present at residues 66 to 77; sequence PYPSGAGLHVGH. The 'KMSKS' region signature appears at 728 to 732; that stretch reads KMGKS. K731 provides a ligand contact to ATP.

Belongs to the class-I aminoacyl-tRNA synthetase family.

It localises to the cytoplasm. The catalysed reaction is tRNA(Leu) + L-leucine + ATP = L-leucyl-tRNA(Leu) + AMP + diphosphate. This Streptomyces griseus subsp. griseus (strain JCM 4626 / CBS 651.72 / NBRC 13350 / KCC S-0626 / ISP 5235) protein is Leucine--tRNA ligase.